We begin with the raw amino-acid sequence, 559 residues long: MKYSELAGLYRRLEKTTLKTLKTRFVADFLKNVPDELLEIVPYLILGKVFPDWDERELGVGEKLLIKAVSIATGVPEGEIENSIKDTGDLGESIALAVKKKKQKSFFSQPLTIKRVYDTFVKVAESQGEGSQDRKMKYLANLFMDAQPEEAKYIARTVLGTMRTGVAEGILRDAIAEAFKVKAELVERAYMLTSDFGYVTKVAKLEGNEGLSKVRIQVGKPVRPMLAQNAASVKDALLEMGGEAAFEIKYDGARVQVHKDGDRVVIYSRRLENVTRSIPEIVEAVRSQLRPEKAIVEGELVAVGDGGKPRPFQYVLRRFRRKYNIEEMIERIPLELNLFDVLYVDGESLVDTPFMERRKRLEEAVEESERIKLAQQLVTKKAEEAEEFYRRALELGHEGLMAKRLDSVYEPGNRGKKWLKIKPTMEDLDLVIIGAEWGEGRRAHLLGSFLVAAYDQHRGEFVPVGKVGSGFTDEDLAEFTKMLKPLIVREEGKYVEIEPRVVIQVTYQEIQKSPKYESGFALRFPRYVALREDKSPEEADTIERISELYGLQERFKAKR.

E247 contributes to the ATP binding site. The active-site N6-AMP-lysine intermediate is K249. ATP contacts are provided by R254, R269, E299, F339, R414, and K420.

Belongs to the ATP-dependent DNA ligase family. It depends on Mg(2+) as a cofactor.

The catalysed reaction is ATP + (deoxyribonucleotide)n-3'-hydroxyl + 5'-phospho-(deoxyribonucleotide)m = (deoxyribonucleotide)n+m + AMP + diphosphate.. It carries out the reaction NAD(+) + (deoxyribonucleotide)n-3'-hydroxyl + 5'-phospho-(deoxyribonucleotide)m = (deoxyribonucleotide)n+m + AMP + beta-nicotinamide D-nucleotide.. Functionally, DNA ligase that seals nicks in double-stranded DNA during DNA replication, DNA recombination and DNA repair. Shows high activity with either ATP or NAD(+). The chain is DNA ligase from Thermococcus fumicolans.